Here is a 632-residue protein sequence, read N- to C-terminus: Phosphatidylinositol 3,4,5-trisphosphate 3-phosphatase and protein-tyrosine-phosphatase PTEN2B (632 aa).

The segment covering 1 to 12 (METDPANSSSKS) has biased composition (polar residues). The interval 1–98 (METDPANSSS…RESPPSIFSS (98 aa)) is disordered. Basic and acidic residues predominate over residues 39–48 (SAEREAHEDS). Positions 63 to 73 (MPASSTGSEPL) are enriched in polar residues. Low complexity predominate over residues 87-98 (SPRESPPSIFSS). The Phosphatase tensin-type domain maps to 189-368 (RRYQEGEFDL…KYYERVQNQF (180 aa)). Cys307 (phosphocysteine intermediate) is an active-site residue. The region spanning 375–502 (ERRCMLRGFR…FHVEIVMIEP (128 aa)) is the C2 tensin-type domain. The interval 504-603 (NSQPTKSKSD…SGHYNPIPNN (100 aa)) is disordered. The span at 505-527 (SQPTKSKSDSTQQQSQSSSSADS) shows a compositional bias: low complexity. Over residues 535–549 (KDDDVFSDSDGEEEG) the composition is skewed to acidic residues. The residue at position 541 (Ser541) is a Phosphoserine. A compositionally biased stretch (polar residues) spans 550–571 (NSQSYSTNEKTASSMHTTSKPH). Positions 584–594 (ANRSVTSSSSS) are enriched in low complexity.

This sequence belongs to the PTEN phosphatase protein family. As to expression, expressed, at low levels, in seedlings, roots, stems, leaves, flowers and siliques. However, at protein level, not observed in older leaves, flowers and siliques.

The enzyme catalyses O-phospho-L-tyrosyl-[protein] + H2O = L-tyrosyl-[protein] + phosphate. The catalysed reaction is a 1,2-diacyl-sn-glycero-3-phospho-(1D-myo-inositol-3,4,5-trisphosphate) + H2O = a 1,2-diacyl-sn-glycero-3-phospho-(1D-myo-inositol-4,5-bisphosphate) + phosphate. Its function is as follows. Protein tyrosine phosphatase that also exhibits a weak lipid phosphatase activity towards PtdIns(3)P. This chain is Phosphatidylinositol 3,4,5-trisphosphate 3-phosphatase and protein-tyrosine-phosphatase PTEN2B, found in Arabidopsis thaliana (Mouse-ear cress).